The sequence spans 110 residues: Small ribosomal subunit protein bS16 (110 aa).

The segment at 84-110 (KRTARNNPEKAVPRKERKAQAEAAAKS) is disordered. Residues 90-103 (NPEKAVPRKERKAQ) are compositionally biased toward basic and acidic residues.

The protein belongs to the bacterial ribosomal protein bS16 family.

The polypeptide is Small ribosomal subunit protein bS16 (Nitrobacter hamburgensis (strain DSM 10229 / NCIMB 13809 / X14)).